The sequence spans 763 residues: Xaa-Pro dipeptidyl-peptidase (763 aa).

Active-site charge relay system residues include S349, D469, and H499.

Belongs to the peptidase S15 family. As to quaternary structure, homodimer.

The protein resides in the cytoplasm. The enzyme catalyses Hydrolyzes Xaa-Pro-|- bonds to release unblocked, N-terminal dipeptides from substrates including Ala-Pro-|-p-nitroanilide and (sequentially) Tyr-Pro-|-Phe-Pro-|-Gly-Pro-|-Ile.. Its function is as follows. Removes N-terminal dipeptides sequentially from polypeptides having unsubstituted N-termini provided that the penultimate residue is proline. The sequence is that of Xaa-Pro dipeptidyl-peptidase from Streptococcus macedonicus (Streptococcus gallolyticus macedonicus).